We begin with the raw amino-acid sequence, 181 residues long: Ribulose bisphosphate carboxylase small subunit, chloroplastic 2 (181 aa).

Residues 1-57 constitute a chloroplast transit peptide; that stretch reads MASSVISSAAVATRTNVTQAGSMIAPFTGLKSAATFPVSRKQNLDITSIASNGGRVR.

Belongs to the RuBisCO small chain family. In terms of assembly, heterohexadecamer of 8 large and 8 small subunits.

It localises to the plastid. The protein localises to the chloroplast. RuBisCO catalyzes two reactions: the carboxylation of D-ribulose 1,5-bisphosphate, the primary event in carbon dioxide fixation, as well as the oxidative fragmentation of the pentose substrate. Both reactions occur simultaneously and in competition at the same active site. Although the small subunit is not catalytic it is essential for maximal activity. The polypeptide is Ribulose bisphosphate carboxylase small subunit, chloroplastic 2 (Solanum tuberosum (Potato)).